The primary structure comprises 280 residues: Energy-coupling factor transporter ATP-binding protein EcfA (280 aa).

In terms of domain architecture, ABC transporter spans I5–E240. ATP is bound at residue G40 to S47.

This sequence belongs to the ABC transporter superfamily. Energy-coupling factor EcfA family. As to quaternary structure, forms a stable energy-coupling factor (ECF) transporter complex composed of 2 membrane-embedded substrate-binding proteins (S component), 2 ATP-binding proteins (A component) and 2 transmembrane proteins (T component).

The protein resides in the cell membrane. In terms of biological role, ATP-binding (A) component of a common energy-coupling factor (ECF) ABC-transporter complex. Unlike classic ABC transporters this ECF transporter provides the energy necessary to transport a number of different substrates. The chain is Energy-coupling factor transporter ATP-binding protein EcfA from Pediococcus pentosaceus (strain ATCC 25745 / CCUG 21536 / LMG 10740 / 183-1w).